Here is a 150-residue protein sequence, read N- to C-terminus: Deoxyuridine 5'-triphosphate nucleotidohydrolase (150 aa).

Substrate is bound by residues 69-71 (RSG), N82, 86-88 (LID), and K96.

This sequence belongs to the dUTPase family. Requires Mg(2+) as cofactor.

The catalysed reaction is dUTP + H2O = dUMP + diphosphate + H(+). Its pathway is pyrimidine metabolism; dUMP biosynthesis; dUMP from dCTP (dUTP route): step 2/2. Its function is as follows. This enzyme is involved in nucleotide metabolism: it produces dUMP, the immediate precursor of thymidine nucleotides and it decreases the intracellular concentration of dUTP so that uracil cannot be incorporated into DNA. This Neisseria meningitidis serogroup B (strain ATCC BAA-335 / MC58) protein is Deoxyuridine 5'-triphosphate nucleotidohydrolase.